A 336-amino-acid chain; its full sequence is MSDSDSENKQTTTTATSVTQRLLLSLKEAAKIIGTKGTKIQKVRDDNNVKIGISERKERCSDRILICTGSIEDVSNAIGDICEILLSEDVVTNDEDSNEKENDEYNSIEDEKFVYPFLNFRLAKPTLDEVNDAETLKKIINIRVLVTRAQCSAIIGTKGDRIKSLIENRGVRMIASNQTLPDSDERLLEIQGTSMAITKVLEDINAVISNEVRATREKRYVPHVRRRNQPVSTNTSSNTGSSKSFDEEFKSIVKIPEAYVGAIVGRQGNRIANLRKYSKTKIVIEKRASEVSDDAERIFEIISNDIKNVELAESMLKKNLETEIQRRKEMEETESA.

KH domains lie at 17 to 81 (SVTQ…IGDI), 139 to 204 (IINI…LEDI), and 248 to 316 (EFKS…ESML).

Belongs to the HEK2 family. Binds RNA.

The protein resides in the cytoplasm. Its subcellular location is the P-body. It is found in the nucleus. It localises to the chromosome. The protein localises to the telomere. RNA-binding protein involved in the correct localization of transcripts in the cell. RNA localization is a widespread mechanism for achieving localized protein synthesis. Involved in structural and functional organization of telomeric chromatin and regulates silencing at the HMR locus. This Vanderwaltozyma polyspora (strain ATCC 22028 / DSM 70294 / BCRC 21397 / CBS 2163 / NBRC 10782 / NRRL Y-8283 / UCD 57-17) (Kluyveromyces polysporus) protein is Heterogeneous nuclear rnp K-like protein 2 (HEK2).